The primary structure comprises 210 residues: Pyridoxine/pyridoxamine 5'-phosphate oxidase (210 aa).

Substrate contacts are provided by residues 7–10 and K65; that span reads REDY. FMN-binding positions include 60-65, 75-76, R81, K82, and Q104; these read RMVLLK and FT. Residues Y122, R126, and S130 each contribute to the substrate site. Residues 139 to 140 and W183 contribute to the FMN site; that span reads QS. 189-191 is a substrate binding site; it reads RLH. R193 contributes to the FMN binding site.

The protein belongs to the pyridoxamine 5'-phosphate oxidase family. As to quaternary structure, homodimer. Requires FMN as cofactor.

The catalysed reaction is pyridoxamine 5'-phosphate + O2 + H2O = pyridoxal 5'-phosphate + H2O2 + NH4(+). It catalyses the reaction pyridoxine 5'-phosphate + O2 = pyridoxal 5'-phosphate + H2O2. It functions in the pathway cofactor metabolism; pyridoxal 5'-phosphate salvage; pyridoxal 5'-phosphate from pyridoxamine 5'-phosphate: step 1/1. The protein operates within cofactor metabolism; pyridoxal 5'-phosphate salvage; pyridoxal 5'-phosphate from pyridoxine 5'-phosphate: step 1/1. Its function is as follows. Catalyzes the oxidation of either pyridoxine 5'-phosphate (PNP) or pyridoxamine 5'-phosphate (PMP) into pyridoxal 5'-phosphate (PLP). This chain is Pyridoxine/pyridoxamine 5'-phosphate oxidase, found in Neisseria meningitidis serogroup C (strain 053442).